The following is a 206-amino-acid chain: Adenylate kinase (206 aa).

ATP is bound at residue 10–15; it reads GAGKGT. Positions 30–59 are NMP; that stretch reads STGDMLRAAVAAGTPVGLKAKDIMASGGLV. Residues T31, R36, 57-59, 85-88, and Q92 contribute to the AMP site; these read GLV and GFPR. Positions 126-142 are LID; the sequence is NRVAETTARGEQVRADD. R127 contributes to the ATP binding site. AMP-binding residues include R139 and R150. M178 serves as a coordination point for ATP.

This sequence belongs to the adenylate kinase family. As to quaternary structure, monomer.

The protein localises to the cytoplasm. The enzyme catalyses AMP + ATP = 2 ADP. It functions in the pathway purine metabolism; AMP biosynthesis via salvage pathway; AMP from ADP: step 1/1. Its function is as follows. Catalyzes the reversible transfer of the terminal phosphate group between ATP and AMP. Plays an important role in cellular energy homeostasis and in adenine nucleotide metabolism. In Nitrobacter winogradskyi (strain ATCC 25391 / DSM 10237 / CIP 104748 / NCIMB 11846 / Nb-255), this protein is Adenylate kinase.